Here is a 138-residue protein sequence, read N- to C-terminus: Transcriptional activator protein (138 aa).

A compositionally biased stretch (low complexity) spans 1–20; it reads MTGSKKTPSTSPSKKLSSPP. Residues 1-23 form a disordered region; the sequence is MTGSKKTPSTSPSKKLSSPPEVK. The short motif at 23–37 is the Nuclear localization signal element; that stretch reads KLRHRFAKRQIRRRR. Residues 42-59 fold into a zinc finger; sequence CGCSIYIHINCVNNGFTH. Positions 85 to 106 are enriched in polar residues; sequence NTASGDANVHTQPGISHSSQSK. Residues 85–123 are disordered; that stretch reads NTASGDANVHTQPGISHSSQSKPQHEDSVGSPQSLLQLP. The span at 113 to 123 shows a compositional bias: low complexity; it reads VGSPQSLLQLP. The segment at 124–138 is transactivation; it reads SLDDVDDDFWADLLK.

It belongs to the geminiviridae transcriptional activator protein family. As to quaternary structure, monomer. Homodimer. Homooligomer. Self-interaction correlates with nuclear localization and efficient activation of transcription. Monomers suppress local silencing by interacting with and inactivating host adenosine kinase 2 (ADK2) in the cytoplasm. Interacts with and inhibits host SNF1 kinase. Binds to ssDNA. In terms of processing, phosphorylated.

The protein localises to the host nucleus. It is found in the host cytoplasm. Its function is as follows. Strong activator of the late viral genes promoters. Enhances the expression of the capsid protein and nuclear shuttle protein. Acts as a suppressor of RNA-mediated gene silencing, also known as post-transcriptional gene silencing (PTGS), a mechanism of plant viral defense that limits the accumulation of viral RNAs. Suppresses the host RNA silencing by inhibiting adenosine kinase 2 (ADK2), a kinase involved in a general methylation pathway. Also suppresses the host basal defense by interacting with and inhibiting SNF1 kinase, a key regulator of cell metabolism implicated in innate antiviral defense. Determines pathogenicity. The sequence is that of Transcriptional activator protein from Pepper huasteco yellow vein virus (PHYVV).